We begin with the raw amino-acid sequence, 87 residues long: Acylphosphatase (87 aa).

Residues 2–87 (RLTALVSGHV…ETGLREFHIY (86 aa)) form the Acylphosphatase-like domain. Residues Arg-17 and Asn-35 contribute to the active site.

It belongs to the acylphosphatase family.

The catalysed reaction is an acyl phosphate + H2O = a carboxylate + phosphate + H(+). The sequence is that of Acylphosphatase (acyP) from Deinococcus radiodurans (strain ATCC 13939 / DSM 20539 / JCM 16871 / CCUG 27074 / LMG 4051 / NBRC 15346 / NCIMB 9279 / VKM B-1422 / R1).